Reading from the N-terminus, the 170-residue chain is Cathelicidin antimicrobial peptide (170 aa).

An N-terminal signal peptide occupies residues Met-1 to Ala-30. A propeptide spans Gln-31–Arg-131 (cathelin-like domain (CLD)). 2 disulfide bridges follow: Cys-86–Cys-97 and Cys-108–Cys-125. The interval Phe-150 to Arg-162 is active core.

The protein belongs to the cathelicidin family. As to quaternary structure, monomer, homodimer or homotrimer (in vitro). Oligomerizes as tetra- or hexamer in solution (in vitro). Proteolytically cleaved by proteinase PRTN3 into antibacterial peptide LL-37. Proteolytically cleaved by cathepsin CTSG and neutrophil elastase ELANE. In terms of processing, resistant to proteolytic degradation in solution, and when bound to both zwitterionic (mimicking mammalian membranes) and negatively charged membranes (mimicking bacterial membranes). Post-translationally, after secretion onto the skin surface, the CAMP gene product is processed by a serine protease-dependent mechanism into multiple novel antimicrobial peptides distinct from and shorter than cathelicidin LL-37. These peptides show enhanced antimicrobial action, acquiring the ability to kill skin pathogens such as S.aureus, E.coli and C.albicans. These peptides have lost the ability to stimulate CXCL8/IL8 release from keratinocytes. The peptides act synergistically, killing bacteria at lower concentrations when present together, and maintain activity at increased salt condition.

The protein localises to the secreted. It is found in the vesicle. Its function is as follows. Antimicrobial protein that is an integral component of the innate immune system. Binds to bacterial lipopolysaccharides (LPS). Acts via neutrophil N-formyl peptide receptors to enhance the release of CXCL2. Postsecretory processing generates multiple cathelicidin antimicrobial peptides with various lengths which act as a topical antimicrobial defense in sweat on skin. The unprocessed precursor form, cathelicidin antimicrobial peptide, inhibits the growth of Gram-negative E.coli and E.aerogenes with efficiencies comparable to that of the mature peptide LL-37 (in vitro). Functionally, antimicrobial peptide that is an integral component of the innate immune system. Binds to bacterial lipopolysaccharides (LPS). Causes membrane permeabilization by forming transmembrane pores (in vitro). Causes lysis of E.coli. Exhibits antimicrobial activity against Gram-negative bacteria such as P.aeruginosa, S.typhimurium, E.aerogenes, E.coli and P.syringae, Gram-positive bacteria such as L.monocytogenes, S.epidermidis, S.pyogenes and S.aureus, as well as vancomycin-resistant enterococci (in vitro). Exhibits antimicrobial activity against methicillin-resistant S.aureus, P.mirabilis, and C.albicans in low-salt media, but not in media containing 100 mM NaCl (in vitro). Forms chiral supramolecular assemblies with quinolone signal (PQS) molecules of P.aeruginosa, which may lead to interference of bacterial quorum signaling and perturbance of bacterial biofilm formation. May form supramolecular fiber-like assemblies on bacterial membranes. Induces cytokine and chemokine producation as well as TNF/TNFA and CSF2/GMCSF production in normal human keratinocytes. Exhibits hemolytic activity against red blood cells. In terms of biological role, exhibits antimicrobial activity against E.coli and B.megaterium (in vitro). The polypeptide is Cathelicidin antimicrobial peptide (Pan troglodytes (Chimpanzee)).